The sequence spans 434 residues: Methylenetetrahydrofolate--tRNA-(uracil-5-)-methyltransferase TrmFO (434 aa).

10–15 provides a ligand contact to FAD; sequence GAGLAG.

Belongs to the MnmG family. TrmFO subfamily. Requires FAD as cofactor.

The protein resides in the cytoplasm. It carries out the reaction uridine(54) in tRNA + (6R)-5,10-methylene-5,6,7,8-tetrahydrofolate + NADH + H(+) = 5-methyluridine(54) in tRNA + (6S)-5,6,7,8-tetrahydrofolate + NAD(+). The enzyme catalyses uridine(54) in tRNA + (6R)-5,10-methylene-5,6,7,8-tetrahydrofolate + NADPH + H(+) = 5-methyluridine(54) in tRNA + (6S)-5,6,7,8-tetrahydrofolate + NADP(+). Functionally, catalyzes the folate-dependent formation of 5-methyl-uridine at position 54 (M-5-U54) in all tRNAs. The chain is Methylenetetrahydrofolate--tRNA-(uracil-5-)-methyltransferase TrmFO from Bacillus cereus (strain ATCC 10987 / NRS 248).